Reading from the N-terminus, the 448-residue chain is Asparagine--tRNA ligase (448 aa).

It belongs to the class-II aminoacyl-tRNA synthetase family. Homodimer.

The protein resides in the cytoplasm. It catalyses the reaction tRNA(Asn) + L-asparagine + ATP = L-asparaginyl-tRNA(Asn) + AMP + diphosphate + H(+). This chain is Asparagine--tRNA ligase, found in Streptococcus pyogenes serotype M12 (strain MGAS9429).